Consider the following 460-residue polypeptide: Interleukin-6 receptor subunit alpha (460 aa).

The signal sequence occupies residues 1–19 (MLTVGCTLLVALLAAPAVA). In terms of domain architecture, Ig-like C2-type spans 20 to 116 (LVLGSCRALE…DVPPEEPKLS (97 aa)). Topologically, residues 20–364 (LVLGSCRALE…VQESSSMSLP (345 aa)) are extracellular. Intrachain disulfides connect Cys25–Cys190, Cys47–Cys92, Cys117–Cys128, and Cys162–Cys173. Residues Asn32 and Asn55 are each glycosylated (N-linked (GlcNAc...) asparagine). Fibronectin type-III domains are found at residues 109-214 (PPEE…VQPD) and 215-313 (PPAN…TPWI). An N-linked (GlcNAc...) asparagine glycan is attached at Asn150. The N-linked (GlcNAc...) asparagine glycan is linked to Asn218. Positions 300–304 (WSEWS) match the WSXWS motif motif. A helical membrane pass occupies residues 365–385 (TFLVAGGSLAFGLLLCVFIIL). Residues 386–460 (RLKQKWKSEA…NSNRDYLFPR (75 aa)) are Cytoplasmic-facing.

Belongs to the type I cytokine receptor family. Type 3 subfamily. In terms of assembly, component of a hexamer of two molecules each of IL6, IL6R and IL6ST; first binds to IL6 to associate with the signaling subunit IL6ST. Interacts (via N-terminal ectodomain) with SORL1; this interaction may affect IL6-binding to IL6R, hence decrease IL6 'classic-signaling'. Also interacts with SORL1; this interaction leads to soluble IL6R internalization. May form a trimeric complex with the soluble SORL1 ectodomain and circulating IL6 receptor; this interaction might stabilize circulating IL6, hence promote IL6 'trans-signaling'. A short soluble form is also released from the membrane by proteolysis. The sIL6R is formed by limited proteolysis of membrane-bound receptors, a process referred to as ectodomain shedding. mIL6R is cleaved by the proteases ADAM10 and ADAM17. In terms of processing, glycosylated. Glycosylation is dispensable for transport, signaling, and cell-surface turnover. Glycosylation at Asn-55 is a protease-regulatory exosite. Glycosylation is required for ADAM17-mediated proteolysis. In terms of tissue distribution, expressed by dendritic cells. Detected in the cerebrospinal fluid.

Its subcellular location is the cell membrane. It localises to the secreted. Its activity is regulated as follows. Classic and trans-signaling are both inhibited by tocilizumab, a humanized monoclonal antibody that blocks interleukin IL6R signaling. Part of the receptor for interleukin 6. Binds to IL6 with low affinity, but does not transduce a signal. Signal activation necessitate an association with IL6ST. Activation leads to the regulation of the immune response, acute-phase reactions and hematopoiesis. The interaction with membrane-bound IL6R and IL6ST stimulates 'classic signaling', the restricted expression of the IL6R limits classic IL6 signaling to only a few tissues such as the liver and some cells of the immune system. Whereas the binding of IL6 and soluble IL6R to IL6ST stimulates 'trans-signaling'. Alternatively, 'cluster signaling' occurs when membrane-bound IL6:IL6R complexes on transmitter cells activate IL6ST receptors on neighboring receiver cells. In terms of biological role, signaling via the membrane-bound IL6R is mostly regenerative and anti-inflammatory. Drives naive CD4(+) T cells to the Th17 lineage, through 'cluster signaling' by dendritic cells. Functionally, soluble form of IL6 receptor (sIL6R) that acts as an agonist of IL6 activity. The IL6:sIL6R complex (hyper-IL6) binds to IL6ST/gp130 on cell surfaces and induces signaling also on cells that do not express membrane-bound IL6R in a process called IL6 'trans-signaling'. sIL6R is causative for the pro-inflammatory properties of IL6 and an important player in the development of chronic inflammatory diseases. In complex with IL6, is required for induction of VEGF production. Plays a protective role during liver injury, being required for maintenance of tissue regeneration. 'Trans-signaling' in central nervous system regulates energy and glucose homeostasis. The polypeptide is Interleukin-6 receptor subunit alpha (Mus musculus (Mouse)).